We begin with the raw amino-acid sequence, 949 residues long: Thrombospondin-4-B (949 aa).

Residues 1–22 form the signal peptide; the sequence is MAGTMHLLTAVSLILMLSSANA. In terms of domain architecture, Laminin G-like spans 23-198; sequence ESTVYNLLTS…LEELKLAYGD (176 aa). 21 cysteine pairs are disulfide-bonded: Cys-276–Cys-287, Cys-281–Cys-296, Cys-299–Cys-310, Cys-316–Cys-327, Cys-321–Cys-336, Cys-339–Cys-363, Cys-369–Cys-383, Cys-377–Cys-392, Cys-395–Cys-407, Cys-413–Cys-427, Cys-421–Cys-437, Cys-439–Cys-450, Cys-466–Cys-471, Cys-476–Cys-496, Cys-512–Cys-532, Cys-535–Cys-555, Cys-571–Cys-591, Cys-594–Cys-614, Cys-632–Cys-652, Cys-672–Cys-692, and Cys-708–Cys-929. One can recognise an EGF-like 1; calcium-binding domain in the interval 312–349; sequence DVDECQFNPCFPGVRCVNMAPGFRCEACPLGFTGKPLE. The region spanning 365–408 is the EGF-like 2; calcium-binding domain; it reads DIDECKGPDNGGCTANSICVNSVGSYQCGRCKTGFTGDQIRGCK. The 43-residue stretch at 409-451 folds into the EGF-like 3 domain; it reads PEKSCGNRLQNPCDPNAQCTEERDGTITCQCGIGWAGNGYLCG. 8 TSP type-3 repeats span residues 452 to 484, 485 to 520, 521 to 543, 544 to 579, 580 to 602, 603 to 640, 641 to 680, and 681 to 716; these read KDTDIDGYPDERLRCRDPTCRKDNCVTVPNSGQ, EDADGDGKGDACDPDADGDGILNEQDNCWLTPNINQ, QNSDKDSHGDACDNCVRVDNPDQ, RDTDSDGLGDACDDDMDGDGLKNFLDNCQRVKNRDQ, LDRDGDGVGDACDSCPDIPNPNQ, SDIDNDLVGDSCDTNQDSDGDGHQDSKDNCPMVINSSQ, LDTDKDGIGDECDDDDDNDGIPDSLPPGPDNCRLVPNPEQ, and IDDNNDGVGDICESDFDQDKVIDRIDNCPENAEITL. Residues 578-671 are disordered; that stretch reads DQLDRDGDGV…PDSLPPGPDN (94 aa). 2 N-linked (GlcNAc...) asparagine glycosylation sites follow: Asn-601 and Asn-637. Acidic residues predominate over residues 649 to 660; it reads GDECDDDDDNDG. The TSP C-terminal domain maps to 720-934; the sequence is RAYQTVVLDP…LKYRCNDTIP (215 aa). Asn-930 carries N-linked (GlcNAc...) asparagine glycosylation.

Belongs to the thrombospondin family. As to quaternary structure, homotrimer; disulfide-linked.

The protein resides in the endoplasmic reticulum. It is found in the sarcoplasmic reticulum. The protein localises to the secreted. Its subcellular location is the extracellular space. It localises to the extracellular matrix. Adhesive glycoprotein that mediates cell-to-cell and cell-to-matrix interactions and may be involved in various processes including cellular proliferation, migration, adhesion and attachment. May play a role in ER stress response. The sequence is that of Thrombospondin-4-B (thbs4b) from Danio rerio (Zebrafish).